We begin with the raw amino-acid sequence, 438 residues long: Chromosomal replication initiator protein DnaA (438 aa).

The interval 1–71 (MTTKEFLTII…CFEIYDGSKP (71 aa)) is domain I, interacts with DnaA modulators. Residues 71–100 (PTIEIKLSNEKKSKKEILKEQTQNESTEST) form a domain II region. Residues 101 to 315 (ILNPSYTFDS…GVLIRINASA (215 aa)) are domain III, AAA+ region. ATP contacts are provided by glycine 145, glycine 147, lysine 148, and threonine 149. Residues 316–438 (SLLNQEITLP…LKNKIINSRE (123 aa)) form a domain IV, binds dsDNA region.

Belongs to the DnaA family. As to quaternary structure, oligomerizes as a right-handed, spiral filament on DNA at oriC.

Its subcellular location is the cytoplasm. Functionally, plays an essential role in the initiation and regulation of chromosomal replication. ATP-DnaA binds to the origin of replication (oriC) to initiate formation of the DNA replication initiation complex once per cell cycle. Binds the DnaA box (a 9 base pair repeat at the origin) and separates the double-stranded (ds)DNA. Forms a right-handed helical filament on oriC DNA; dsDNA binds to the exterior of the filament while single-stranded (ss)DNA is stabiized in the filament's interior. The ATP-DnaA-oriC complex binds and stabilizes one strand of the AT-rich DNA unwinding element (DUE), permitting loading of DNA polymerase. After initiation quickly degrades to an ADP-DnaA complex that is not apt for DNA replication. Binds acidic phospholipids. In Aliarcobacter butzleri (strain RM4018) (Arcobacter butzleri), this protein is Chromosomal replication initiator protein DnaA.